The following is a 254-amino-acid chain: MGGEEEVVSVELPAPSSWKKLFYPNKVGSVKKTEVVFVAPTGEEISNRKQLEQYLKSHPGNPAIAEFDWTTSGTPRRSARISEKTKATPSPDKEPPKKRGRTKSPVSKKDAEGEKSEGGGEENSHVKDTEMNPPEGIAENENVTDKNGSGETERVNDAKENIVAEETPNAAPVQEEGESMKEKALDSVDDKSKETDKEKDTGSIEKNSVDVEKKTVEASDEKKNSEAETRNHEENGLTTEAEGKEKTAEGEATG.

The MBD domain occupies 4–74 (EEEVVSVELP…AEFDWTTSGT (71 aa)). Residues 56-254 (KSHPGNPAIA…EKTAEGEATG (199 aa)) form a disordered region. Composition is skewed to basic and acidic residues over residues 80–97 (RISE…EPPK), 107–130 (SKKD…KDTE), 151–162 (ETERVNDAKENI), and 178–254 (ESMK…EATG). Ser116 carries the post-translational modification Phosphoserine.

In terms of tissue distribution, expressed in leaves (around hydathodes), buds, flowers (carpels and pollen grains), stems (around nodes), siliques, mature seeds and roots.

It localises to the nucleus. Its function is as follows. Transcriptional regulator that binds DNA independently of its methylation status. Required during plant organogenesis and development. This chain is Methyl-CpG-binding domain-containing protein 11 (MBD11), found in Arabidopsis thaliana (Mouse-ear cress).